A 589-amino-acid polypeptide reads, in one-letter code: Lipoprotein LpqB (589 aa).

The signal sequence occupies residues 1 to 20 (MMRGVLVIMRLLCLGMLFTG). Cys-21 carries N-palmitoyl cysteine lipidation. The S-diacylglycerol cysteine moiety is linked to residue Cys-21.

The protein belongs to the LpqB lipoprotein family.

Its subcellular location is the cell membrane. This is Lipoprotein LpqB from Mycobacterium leprae (strain TN).